Reading from the N-terminus, the 353-residue chain is Protein AC18 (353 aa).

It localises to the host nucleus. The protein localises to the host cytoplasm. May play a role in occlusion-derived virions (ODV) formation and/or regulation of late viral gene expression. This Autographa californica nuclear polyhedrosis virus (AcMNPV) protein is Protein AC18 (DA41).